We begin with the raw amino-acid sequence, 127 residues long: Egg cell-secreted protein 1.4 (127 aa).

An N-terminal signal peptide occupies residues 1–25 (MASNTTFLFSTVTLLIILLNTTVSG).

The protein belongs to the plant egg cell-secreted peptide family. In terms of tissue distribution, restricted to female reproductive tissues, specifically accumulating in storage vesicles of the unfertilized egg cell.

It is found in the cytoplasmic vesicle. The protein resides in the secreted. Involved in the regulation of gamete interactions during the double fertilization and to prevent multiple-pollen tube attraction; mediates the redistribution of the gamete fusogen HAP2/GCS1 to the cell surface after secretion upon sperm arrival. The chain is Egg cell-secreted protein 1.4 (EC1.4) from Arabidopsis thaliana (Mouse-ear cress).